The chain runs to 748 residues: 5-methyltetrahydropteroyltriglutamate--homocysteine methyltransferase (748 aa).

5-methyltetrahydropteroyltri-L-glutamate is bound by residues 18 to 21 (REWK) and lysine 112. Residues 420-422 (IGS) and glutamate 473 each bind L-homocysteine. L-methionine-binding positions include 420 to 422 (IGS) and glutamate 473. Tryptophan 550 lines the 5-methyltetrahydropteroyltri-L-glutamate pocket. Aspartate 588 serves as a coordination point for L-homocysteine. Residue aspartate 588 coordinates L-methionine. Glutamate 594 contacts 5-methyltetrahydropteroyltri-L-glutamate. Zn(2+) contacts are provided by histidine 630, cysteine 632, and glutamate 654. Catalysis depends on histidine 683, which acts as the Proton donor. Cysteine 715 provides a ligand contact to Zn(2+).

Belongs to the vitamin-B12 independent methionine synthase family. Requires Zn(2+) as cofactor.

It carries out the reaction 5-methyltetrahydropteroyltri-L-glutamate + L-homocysteine = tetrahydropteroyltri-L-glutamate + L-methionine. Its pathway is amino-acid biosynthesis; L-methionine biosynthesis via de novo pathway; L-methionine from L-homocysteine (MetE route): step 1/1. Catalyzes the transfer of a methyl group from 5-methyltetrahydrofolate to homocysteine resulting in methionine formation. This chain is 5-methyltetrahydropteroyltriglutamate--homocysteine methyltransferase, found in Staphylococcus epidermidis (strain ATCC 12228 / FDA PCI 1200).